A 315-amino-acid polypeptide reads, in one-letter code: Porphobilinogen deaminase (315 aa).

S-(dipyrrolylmethanemethyl)cysteine is present on Cys245.

This sequence belongs to the HMBS family. In terms of assembly, monomer. Requires dipyrromethane as cofactor.

It catalyses the reaction 4 porphobilinogen + H2O = hydroxymethylbilane + 4 NH4(+). Its pathway is porphyrin-containing compound metabolism; protoporphyrin-IX biosynthesis; coproporphyrinogen-III from 5-aminolevulinate: step 2/4. It functions in the pathway porphyrin-containing compound metabolism; chlorophyll biosynthesis. In terms of biological role, tetrapolymerization of the monopyrrole PBG into the hydroxymethylbilane pre-uroporphyrinogen in several discrete steps. This is Porphobilinogen deaminase from Prochlorococcus marinus (strain NATL2A).